The chain runs to 1582 residues: Nik-related protein kinase (1582 aa).

One can recognise a Protein kinase domain in the interval 25–313; the sequence is FSLDKTIGLG…SANMLQHPFV (289 aa). ATP contacts are provided by residues 31 to 39 and lysine 54; that span reads IGLGTYGRI. The active-site Proton acceptor is the aspartate 177. Low complexity-rich tracts occupy residues 492-507, 527-538, and 551-572; these read QVQS…QTQT, PEQQRQGQAPEQ, and EQNQ…AQAE. Residues 492-579 are disordered; the sequence is QVQSQVSKKQ…QAETEAEEPE (88 aa). Residues 725–759 adopt a coiled-coil conformation; it reads QRRQRRWEDIFNQHEEELRQVDKDKEDESSDNDEV. Disordered stretches follow at residues 783-859 and 926-1156; these read EVQE…PPYS and ASAD…GSGM. Composition is skewed to polar residues over residues 803–814, 825–834, and 850–859; these read FSSSVPQRSLLE, RSSQNRQNWL, and RRSQSSPPYS. Phosphoserine occurs at positions 852 and 855. Acidic residues predominate over residues 926–944; the sequence is ASADTDGDDDDESNDTFED. Composition is skewed to basic and acidic residues over residues 965-978 and 999-1016; these read VCKD…KFVD and GSCK…EEAY. 3 positions are modified to phosphoserine: serine 1027, serine 1031, and serine 1034. Composition is skewed to basic and acidic residues over residues 1043-1061 and 1125-1135; these read QEEH…EGDG and PDHESDNKDIS. The span at 1136–1154 shows a compositional bias: polar residues; that stretch reads ESSTQSDFSANHSSPSKGS. Residues 1209–1552 form the CNH domain; the sequence is TSEICCGSLW…RFLCTRGDKL (344 aa).

Belongs to the protein kinase superfamily. STE Ser/Thr protein kinase family. STE20 subfamily.

It catalyses the reaction L-seryl-[protein] + ATP = O-phospho-L-seryl-[protein] + ADP + H(+). The catalysed reaction is L-threonyl-[protein] + ATP = O-phospho-L-threonyl-[protein] + ADP + H(+). Its function is as follows. May phosphorylate cofilin-1 and induce actin polymerization through this process, during the late stages of embryogenesis. Involved in the TNF-alpha-induced signaling pathway. This chain is Nik-related protein kinase (NRK), found in Homo sapiens (Human).